We begin with the raw amino-acid sequence, 364 residues long: MKKREDTRVVVGMSGGVDSSVTALLLKEQGYDVIGIFMKNWDDSNDSGFCSATEDYEDVERVAQQLGIPYYAVNFEKQYWDKVFTYFLEEYKAGRTPNPDVMCNKEIKFKAFLNHAISLGADYVATGHYAQLQELDGEYRLIKGADANKDQTYFLNALSQKQLSKVMFPLGHLQKAEVRKIAAEAELATATKKDSTGICFIGERDFKEFLQTFLPAQPGRMETMDGIDKGQHDGLMYYTLGQRQGLGIGGAGEPWFVIDKDLERNVLIVGQGYHHPGLYSDGLWATDMNWIAKEERTSPFTCKAKFRYRQEDQGVTVFPKEDGRAFIQFDQPQRAITPGQAVVLYEGDRCIGGGVIDKIHRENA.

Residues 12–19 (GMSGGVDS) and Met-38 contribute to the ATP site. Residues 98-100 (NPD) are interaction with target base in tRNA. Cys-103 serves as the catalytic Nucleophile. Cys-103 and Cys-199 form a disulfide bridge. Gly-127 lines the ATP pocket. Positions 149-151 (KDQ) are interaction with tRNA. Cys-199 acts as the Cysteine persulfide intermediate in catalysis. The tract at residues 307–308 (RY) is interaction with tRNA.

This sequence belongs to the MnmA/TRMU family.

The protein localises to the cytoplasm. The catalysed reaction is S-sulfanyl-L-cysteinyl-[protein] + uridine(34) in tRNA + AH2 + ATP = 2-thiouridine(34) in tRNA + L-cysteinyl-[protein] + A + AMP + diphosphate + H(+). Catalyzes the 2-thiolation of uridine at the wobble position (U34) of tRNA, leading to the formation of s(2)U34. The sequence is that of tRNA-specific 2-thiouridylase MnmA from Shouchella clausii (strain KSM-K16) (Alkalihalobacillus clausii).